Reading from the N-terminus, the 436-residue chain is GTPase Der (436 aa).

2 EngA-type G domains span residues proline 4–glutamate 167 and isoleucine 176–lysine 351. GTP is bound by residues glycine 10–serine 17, aspartate 57–isoleucine 61, asparagine 119–aspartate 122, glycine 182–serine 189, aspartate 229–methionine 233, and asparagine 294–aspartate 297. In terms of domain architecture, KH-like spans lysine 352 to asparagine 436.

Belongs to the TRAFAC class TrmE-Era-EngA-EngB-Septin-like GTPase superfamily. EngA (Der) GTPase family. As to quaternary structure, associates with the 50S ribosomal subunit.

Functionally, GTPase that plays an essential role in the late steps of ribosome biogenesis. The chain is GTPase Der from Staphylococcus aureus (strain Mu3 / ATCC 700698).